The primary structure comprises 571 residues: Proline--tRNA ligase (571 aa).

Belongs to the class-II aminoacyl-tRNA synthetase family. ProS type 1 subfamily. As to quaternary structure, homodimer.

It localises to the cytoplasm. It carries out the reaction tRNA(Pro) + L-proline + ATP = L-prolyl-tRNA(Pro) + AMP + diphosphate. Functionally, catalyzes the attachment of proline to tRNA(Pro) in a two-step reaction: proline is first activated by ATP to form Pro-AMP and then transferred to the acceptor end of tRNA(Pro). As ProRS can inadvertently accommodate and process non-cognate amino acids such as alanine and cysteine, to avoid such errors it has two additional distinct editing activities against alanine. One activity is designated as 'pretransfer' editing and involves the tRNA(Pro)-independent hydrolysis of activated Ala-AMP. The other activity is designated 'posttransfer' editing and involves deacylation of mischarged Ala-tRNA(Pro). The misacylated Cys-tRNA(Pro) is not edited by ProRS. The sequence is that of Proline--tRNA ligase from Pseudoalteromonas atlantica (strain T6c / ATCC BAA-1087).